Here is a 438-residue protein sequence, read N- to C-terminus: Fumarate hydratase class II (438 aa).

Residues 76–78 (SGT), 101–104 (HPND), 111–113 (SSN), and Thr159 contribute to the substrate site. The Proton donor/acceptor role is filled by His160. Ser291 is a catalytic residue. Substrate is bound by residues Ser292 and 297 to 299 (KTN).

Belongs to the class-II fumarase/aspartase family. Fumarase subfamily. As to quaternary structure, homotetramer.

The protein localises to the cytoplasm. It carries out the reaction (S)-malate = fumarate + H2O. It functions in the pathway carbohydrate metabolism; tricarboxylic acid cycle; (S)-malate from fumarate: step 1/1. Functionally, involved in the TCA cycle. Catalyzes the stereospecific interconversion of fumarate to L-malate. The polypeptide is Fumarate hydratase class II (Saccharolobus solfataricus (strain ATCC 35092 / DSM 1617 / JCM 11322 / P2) (Sulfolobus solfataricus)).